Here is a 460-residue protein sequence, read N- to C-terminus: MPLPQVAIVGRPNVGKSTLFNRLLRQRRAIVEEVPGTTRDRIYGIVEWNDLRFGLFDTGGLLTEEEIERSSERELVEATKAQAELAIAEADLVIFVVDASAGPTAGDWEVADFLRRTDKPILLVANKAESREREFNALQFYELGLGDPIPVSALHGRGIADLLDAIAERLPRREEDGTAEAEAPKIAIVGRPNVGKSALLNAILGQPRQIVSPIPGTTRDAVDTELVWKGQPIVLIDTAGIRRPGRIERGIERYSILRAERAIERSDVAILVVDATEPFTHQDQAVAGKVLDAKKGIVVAINKWDLFEHMEGEGAREAFEEDAREAFHFMPWAPLVFVSALTGKNVEHVVDLALVVVAERSRRIPTAELNQLLREAIAHHPPPTRPGKWVKFYYVTQPEVNPPTFVFFCNRPQLVHFSYKRYLENRIRERYGFLGTPIELVFRERERSAPAWERGKAGRS.

2 consecutive EngA-type G domains span residues 4 to 174 (PQVA…PRRE) and 184 to 361 (PKIA…AERS). Residues 10 to 17 (GRPNVGKS), 57 to 61 (DTGGL), 126 to 129 (NKAE), 190 to 197 (GRPNVGKS), 237 to 241 (DTAGI), and 302 to 305 (NKWD) each bind GTP. One can recognise a KH-like domain in the interval 362–446 (RRIPTAELNQ…PIELVFRERE (85 aa)).

The protein belongs to the TRAFAC class TrmE-Era-EngA-EngB-Septin-like GTPase superfamily. EngA (Der) GTPase family. In terms of assembly, associates with the 50S ribosomal subunit.

Its function is as follows. GTPase that plays an essential role in the late steps of ribosome biogenesis. The polypeptide is GTPase Der (Thermomicrobium roseum (strain ATCC 27502 / DSM 5159 / P-2)).